Here is a 462-residue protein sequence, read N- to C-terminus: Bifunctional dihydrofolate reductase-thymidylate synthase (462 aa).

The DHFR domain occupies 6 to 165 (TFSMVLAMTL…INYDYQHLIN (160 aa)). Position 10 (Val10) interacts with substrate. Residues Ala12 and 18–24 (GIGYQNR) contribute to the NADP(+) site. Asp32 contacts substrate. Residues 49-51 (RKT) and 68-71 (ISKN) each bind NADP(+). Ile101 provides a ligand contact to substrate. 102–109 (GGKRIFEE) contributes to the NADP(+) binding site. Thr122 is a substrate binding site. Positions 180–462 (ENQYLDMITK…HDKIEMKMAV (283 aa)) are thymidylate synthase. Arg200 provides a ligand contact to dUMP. Residue Cys345 is part of the active site. Residues His346, 364–368 (QRSCD), Asn376, and 406–408 (HIY) each bind dUMP.

The protein in the N-terminal section; belongs to the dihydrofolate reductase family. This sequence in the C-terminal section; belongs to the thymidylate synthase family.

It carries out the reaction (6S)-5,6,7,8-tetrahydrofolate + NADP(+) = 7,8-dihydrofolate + NADPH + H(+). The catalysed reaction is dUMP + (6R)-5,10-methylene-5,6,7,8-tetrahydrofolate = 7,8-dihydrofolate + dTMP. It participates in cofactor biosynthesis; tetrahydrofolate biosynthesis; 5,6,7,8-tetrahydrofolate from 7,8-dihydrofolate: step 1/1. Its function is as follows. Bifunctional enzyme. Involved in de novo dTMP biosynthesis. Key enzyme in folate metabolism. Catalyzes an essential reaction for de novo glycine and purine synthesis, DNA precursor synthesis, and for the conversion of dUMP to dTMP. This chain is Bifunctional dihydrofolate reductase-thymidylate synthase, found in Paramecium tetraurelia.